Reading from the N-terminus, the 417-residue chain is Serine hydroxymethyltransferase (417 aa).

Residues leucine 112 and 116–118 contribute to the (6S)-5,6,7,8-tetrahydrofolate site; that span reads GHL. N6-(pyridoxal phosphate)lysine is present on lysine 221. (6S)-5,6,7,8-tetrahydrofolate is bound at residue glutamate 247.

Belongs to the SHMT family. In terms of assembly, homodimer. Pyridoxal 5'-phosphate serves as cofactor.

It is found in the cytoplasm. It catalyses the reaction (6R)-5,10-methylene-5,6,7,8-tetrahydrofolate + glycine + H2O = (6S)-5,6,7,8-tetrahydrofolate + L-serine. Its pathway is one-carbon metabolism; tetrahydrofolate interconversion. It functions in the pathway amino-acid biosynthesis; glycine biosynthesis; glycine from L-serine: step 1/1. In terms of biological role, catalyzes the reversible interconversion of serine and glycine with tetrahydrofolate (THF) serving as the one-carbon carrier. This reaction serves as the major source of one-carbon groups required for the biosynthesis of purines, thymidylate, methionine, and other important biomolecules. Also exhibits THF-independent aldolase activity toward beta-hydroxyamino acids, producing glycine and aldehydes, via a retro-aldol mechanism. The protein is Serine hydroxymethyltransferase of Borrelia turicatae (strain 91E135).